Reading from the N-terminus, the 300-residue chain is Protease HtpX homolog (300 aa).

Helical transmembrane passes span 5–25 (IFLLTLTNIAVIFLLTLFISL) and 41–61 (TLFLFSMVVGFTGSFISLAIS). H146 contributes to the Zn(2+) binding site. The active site involves E147. H150 provides a ligand contact to Zn(2+). 2 helical membrane passes run 161–181 (LLQGVVNTFVVFLSRIIGFFV) and 196–216 (IGFYLGMFISEIVLGLLASII). E225 is a Zn(2+) binding site.

Belongs to the peptidase M48B family. It depends on Zn(2+) as a cofactor.

It localises to the cell inner membrane. This chain is Protease HtpX homolog, found in Methylacidiphilum infernorum (isolate V4) (Methylokorus infernorum (strain V4)).